A 566-amino-acid chain; its full sequence is MALSVPGYSPGFRKPPEVVRLRRKRARSRGAAASPPRELTEPAARRAALVAGLPLRPFPAAGGRGGGSGGGPAAARRNPFARLDNRPRVAAEPPDGPAREQPEAPVPFLDSNQENDLLWEEKFPERTTVTELPQTSHVSFSEPDIPSSKSTELPVDWSIKTRLLFTSSQPFTWADHLKAQEEAQGLVQHCRATEVTLPKSIQDPKLSSELRCTFQQSLIYWLHPALSWLPLFPRIGADRKMAGKTSPWSNDATLQHVLMSDWSVSFTSLYNLLKTKLCPYFYVCTYQFTVLFRAAGLAGSDLITALISPTTRGLREAMRNEGIEFSLPLIKESGHKKETASGTSLGYGEEQAISDEDEEESFSWLEEMGVQDKIKKPDILSIKLRKEKHEVQMDHRPESVVLVKGINTFTLLNFLINSKSLVATSGPQAGLPPTLLSPVAFRGATMQMLKARSVNVKTQALSGYRDQFSLEITGPIMPHSLHSLTMLLKSSQSGSFSAVLYPHEPTAVFNICLQMDKVLDMEVVHKELTNCGLHPNTLEQLSQIPLLGKSSLRNVVLRDYIYNWRS.

A disordered region spans residues 1–110; it reads MALSVPGYSP…QPEAPVPFLD (110 aa). Phosphoserine is present on residues serine 28 and serine 34. The span at 62 to 72 shows a compositional bias: gly residues; that stretch reads GGRGGGSGGGP. Residues 73–82 are compositionally biased toward low complexity; that stretch reads AAARRNPFAR.

The protein belongs to the DONSON family. In terms of assembly, component of the replisome complex composed of at least DONSON, MCM2, MCM7, PCNA and TICRR; interaction at least with PCNA occurs during DNA replication. In terms of tissue distribution, expressed in the brain, with higher levels in prenatal compared to adult brain.

Its subcellular location is the nucleus. Replisome component that maintains genome stability by protecting stalled or damaged replication forks. After the induction of replication stress, required for the stabilization of stalled replication forks, the efficient activation of the intra-S-phase and G/2M cell-cycle checkpoints and the maintenance of genome stability. This Homo sapiens (Human) protein is Protein downstream neighbor of Son (DONSON).